Reading from the N-terminus, the 470-residue chain is Methylenetetrahydrofolate--tRNA-(uracil-5-)-methyltransferase TrmFO (470 aa).

10-15 (GAGLAG) provides a ligand contact to FAD.

The protein belongs to the MnmG family. TrmFO subfamily. FAD serves as cofactor.

Its subcellular location is the cytoplasm. The enzyme catalyses uridine(54) in tRNA + (6R)-5,10-methylene-5,6,7,8-tetrahydrofolate + NADH + H(+) = 5-methyluridine(54) in tRNA + (6S)-5,6,7,8-tetrahydrofolate + NAD(+). It catalyses the reaction uridine(54) in tRNA + (6R)-5,10-methylene-5,6,7,8-tetrahydrofolate + NADPH + H(+) = 5-methyluridine(54) in tRNA + (6S)-5,6,7,8-tetrahydrofolate + NADP(+). In terms of biological role, catalyzes the folate-dependent formation of 5-methyl-uridine at position 54 (M-5-U54) in all tRNAs. This Prochlorococcus marinus (strain MIT 9215) protein is Methylenetetrahydrofolate--tRNA-(uracil-5-)-methyltransferase TrmFO.